Here is a 400-residue protein sequence, read N- to C-terminus: Cell division protein FtsZ 2 (400 aa).

A compositionally biased stretch (basic and acidic residues) spans 1 to 16 (MQDIVREAMERDEAER). A disordered region spans residues 1–30 (MQDIVREAMERDEAERQTQSSLEDSDDQFG). Residues 41-45 (GAGNN), 128-130 (GTG), E159, R162, and D205 each bind GTP. The segment at 338 to 400 (VLGPSTQKQA…EKNNGLDVIR (63 aa)) is disordered. The segment covering 352–364 (QSIQSRESQQQHS) has biased composition (low complexity). The span at 365 to 382 (GSEFDSSERAQTAQSGTW) shows a compositional bias: polar residues. A compositionally biased stretch (basic and acidic residues) spans 385 to 400 (GGRDEVEKNNGLDVIR).

Belongs to the FtsZ family. Homodimer. Polymerizes to form a dynamic ring structure in a strictly GTP-dependent manner. Interacts directly with several other division proteins. Interacts with SepF.

The protein resides in the cytoplasm. In terms of biological role, essential cell division protein that forms a contractile ring structure (Z ring) at the future cell division site. The regulation of the ring assembly controls the timing and the location of cell division. One of the functions of the FtsZ ring is to recruit other cell division proteins to the septum to produce a new cell wall between the dividing cells. Binds GTP and shows GTPase activity. Required for division ring constriction. The chain is Cell division protein FtsZ 2 from Haloferax volcanii (strain ATCC 29605 / DSM 3757 / JCM 8879 / NBRC 14742 / NCIMB 2012 / VKM B-1768 / DS2) (Halobacterium volcanii).